Here is a 463-residue protein sequence, read N- to C-terminus: uncharacterized protein (463 aa).

In terms of domain architecture, TRAM spans Leu12–Lys70. Positions 83, 89, 92, and 171 each coordinate [4Fe-4S] cluster. 4 residues coordinate S-adenosyl-L-methionine: Gln295, Tyr324, Glu345, and Asp390. Cys417 (nucleophile) is an active-site residue.

The protein belongs to the class I-like SAM-binding methyltransferase superfamily. RNA M5U methyltransferase family.

This is an uncharacterized protein from Synechocystis sp. (strain ATCC 27184 / PCC 6803 / Kazusa).